The sequence spans 258 residues: DNA repair protein RecO (258 aa).

This sequence belongs to the RecO family.

Involved in DNA repair and RecF pathway recombination. The chain is DNA repair protein RecO from Lactiplantibacillus plantarum (strain ATCC BAA-793 / NCIMB 8826 / WCFS1) (Lactobacillus plantarum).